Here is a 465-residue protein sequence, read N- to C-terminus: Ribulose bisphosphate carboxylase large chain (465 aa).

Lys-4 carries the post-translational modification N6,N6,N6-trimethyllysine. Substrate is bound by residues Asn-113 and Thr-163. The Proton acceptor role is filled by Lys-165. Lys-167 contributes to the substrate binding site. The Mg(2+) site is built by Lys-191, Asp-193, and Glu-194. Residue Lys-191 is modified to N6-carboxylysine. His-284 serves as the catalytic Proton acceptor. The substrate site is built by Arg-285, His-317, and Ser-369.

This sequence belongs to the RuBisCO large chain family. Type I subfamily. As to quaternary structure, heterohexadecamer of 8 large chains and 8 small chains; disulfide-linked. The disulfide link is formed within the large subunit homodimers. It depends on Mg(2+) as a cofactor. Post-translationally, the disulfide bond which can form in the large chain dimeric partners within the hexadecamer appears to be associated with oxidative stress and protein turnover.

Its subcellular location is the plastid. It localises to the chloroplast. The catalysed reaction is 2 (2R)-3-phosphoglycerate + 2 H(+) = D-ribulose 1,5-bisphosphate + CO2 + H2O. It carries out the reaction D-ribulose 1,5-bisphosphate + O2 = 2-phosphoglycolate + (2R)-3-phosphoglycerate + 2 H(+). Functionally, ruBisCO catalyzes two reactions: the carboxylation of D-ribulose 1,5-bisphosphate, the primary event in carbon dioxide fixation, as well as the oxidative fragmentation of the pentose substrate in the photorespiration process. Both reactions occur simultaneously and in competition at the same active site. The sequence is that of Ribulose bisphosphate carboxylase large chain from Senega cruciata (Cross-leaved milkwort).